Consider the following 171-residue polypeptide: Ribosome maturation factor RimM (171 aa).

The PRC barrel domain occupies 97 to 169; that stretch reads DGEFYYHEII…RVDVSIMEGL (73 aa).

This sequence belongs to the RimM family. In terms of assembly, binds ribosomal protein uS19.

It is found in the cytoplasm. An accessory protein needed during the final step in the assembly of 30S ribosomal subunit, possibly for assembly of the head region. Essential for efficient processing of 16S rRNA. May be needed both before and after RbfA during the maturation of 16S rRNA. It has affinity for free ribosomal 30S subunits but not for 70S ribosomes. The sequence is that of Ribosome maturation factor RimM from Lactococcus lactis subsp. lactis (strain IL1403) (Streptococcus lactis).